A 174-amino-acid chain; its full sequence is Cytidylate kinase (174 aa).

7-15 provides a ligand contact to ATP; it reads GLPGTGTTT.

The protein belongs to the cytidylate kinase family. Type 2 subfamily.

Its subcellular location is the cytoplasm. The enzyme catalyses CMP + ATP = CDP + ADP. It carries out the reaction dCMP + ATP = dCDP + ADP. The sequence is that of Cytidylate kinase from Methanococcus vannielii (strain ATCC 35089 / DSM 1224 / JCM 13029 / OCM 148 / SB).